Reading from the N-terminus, the 119-residue chain is FAD-linked sulfhydryl oxidase (119 aa).

In terms of domain architecture, ERV/ALR sulfhydryl oxidase spans 1–97 (MLHWGPKFWR…ISWSEYKNIY (97 aa)). A disulfide bond links cysteine 44 and cysteine 47.

Belongs to the asfivirus B119L family. In terms of assembly, interacts with A151R. FAD is required as a cofactor.

It is found in the host cytoplasm. The protein localises to the virion. It catalyses the reaction 2 R'C(R)SH + O2 = R'C(R)S-S(R)CR' + H2O2. Its function is as follows. FAD-dependent sulfhydryl oxidase that catalyzes the formation of disulfide bonds in viral proteins produced in the cell cytoplasm. Involved in virion maturation. The protein is FAD-linked sulfhydryl oxidase of Ornithodoros (relapsing fever ticks).